Here is a 121-residue protein sequence, read N- to C-terminus: Large ribosomal subunit protein bL12 (121 aa).

This sequence belongs to the bacterial ribosomal protein bL12 family. As to quaternary structure, homodimer. Part of the ribosomal stalk of the 50S ribosomal subunit. Forms a multimeric L10(L12)X complex, where L10 forms an elongated spine to which 2 to 4 L12 dimers bind in a sequential fashion. Binds GTP-bound translation factors.

Functionally, forms part of the ribosomal stalk which helps the ribosome interact with GTP-bound translation factors. Is thus essential for accurate translation. This is Large ribosomal subunit protein bL12 from Shewanella frigidimarina (strain NCIMB 400).